Reading from the N-terminus, the 59-residue chain is Small ribosomal subunit protein bS21 (59 aa).

A disordered region spans residues 36–59 (EHYEKPSVKRKKKAEAAKRNKSKF). Positions 43–59 (VKRKKKAEAAKRNKSKF) are enriched in basic residues.

This sequence belongs to the bacterial ribosomal protein bS21 family.

In Alkaliphilus oremlandii (strain OhILAs) (Clostridium oremlandii (strain OhILAs)), this protein is Small ribosomal subunit protein bS21.